A 491-amino-acid polypeptide reads, in one-letter code: Katanin p60 ATPase-containing subunit A1 (491 aa).

Positions 1-29 are interaction with KATNB1; sequence MSLLMISENVKLAREYALLGNYDSAMVYY. The tract at residues 1–75 is interaction with dynein and NDEL1; that stretch reads MSLLMISENV…VKDIMKTLES (75 aa). Positions 1–185 are interaction with microtubules; that stretch reads MSLLMISENV…EPETNKFDST (185 aa). 2 positions are modified to phosphoserine; by DYRK2: serine 42 and serine 109. The segment at 87-185 is disordered; sequence QHDLPASEGE…EPETNKFDST (99 aa). The segment covering 117–144 has biased composition (polar residues); the sequence is SSQYSDPKSHGNRPSTTVRVHRSSAQNV. Residue threonine 133 is modified to Phosphothreonine; by DYRK2. Basic and acidic residues predominate over residues 145 to 169; sequence HNDRGKAVRCREKKEQNKGREEKNK. Serine 170 is subject to Phosphoserine. 249 to 256 contacts ATP; the sequence is GPPGTGKT.

This sequence belongs to the AAA ATPase family. Katanin p60 subunit A1 subfamily. In terms of assembly, can homooligomerize into hexameric rings, which may be promoted by interaction with microtubules. Interacts with KATNB1, which may serve as a targeting subunit. Interacts with ASPM; the katanin complex formation KATNA1:KATNB1 is required for the association of ASPM. Interacts with dynein and NDEL1. Associates with the E3 ligase complex containing DYRK2, EDD/UBR5, DDB1 and DCAF1 proteins (EDVP complex). Interacts with KLHL42 (via the kelch domains). Interacts with CUL3; the interaction is enhanced by KLHL42. Interacts with KATNB1 and KATNBL1. Interacts with CAMSAP2 and CAMSAP3; leading to regulate the length of CAMSAP-decorated microtubule stretches. In terms of processing, phosphorylation by DYRK2 triggers ubiquitination and subsequent degradation. Post-translationally, ubiquitinated by the BCR(KLHL42) E3 ubiquitin ligase complex, leading to its proteasomal degradation. Ubiquitinated by the EDVP E3 ligase complex and subsequently targeted for proteasomal degradation.

The protein localises to the cytoplasm. Its subcellular location is the midbody. The protein resides in the cytoskeleton. It is found in the microtubule organizing center. It localises to the centrosome. The protein localises to the spindle pole. Its subcellular location is the spindle. It carries out the reaction n ATP + n H2O + a microtubule = n ADP + n phosphate + (n+1) alpha/beta tubulin heterodimers.. With respect to regulation, ATPase activity is stimulated by microtubules, which promote homooligomerization. ATP-dependent microtubule severing is stimulated by interaction with KATNB1. Its function is as follows. Catalytic subunit of a complex which severs microtubules in an ATP-dependent manner. Microtubule severing may promote rapid reorganization of cellular microtubule arrays and the release of microtubules from the centrosome following nucleation. Microtubule release from the mitotic spindle poles may allow depolymerization of the microtubule end proximal to the spindle pole, leading to poleward microtubule flux and poleward motion of chromosome. Microtubule release within the cell body of neurons may be required for their transport into neuronal processes by microtubule-dependent motor proteins. This transport is required for axonal growth. This is Katanin p60 ATPase-containing subunit A1 from Homo sapiens (Human).